We begin with the raw amino-acid sequence, 71 residues long: Conotoxin Bu23 (71 aa).

An N-terminal signal peptide occupies residues 1–21 (MGMRMMVTVFLLGVLATTVVS). Residues 22 to 37 (LRSNRASDGRRGIVNK) constitute a propeptide that is removed on maturation. Asparagine 70 carries the post-translational modification Asparagine amide.

The protein belongs to the conotoxin A superfamily. Post-translationally, contains 3 disulfide bonds. They are not indicated here, since framework IV presents two different connectivities (I-V, II-III, IV-VI and I-III, II-V, IV-VI). In terms of tissue distribution, expressed by the venom duct.

The protein localises to the secreted. This Conus bullatus (Bubble cone) protein is Conotoxin Bu23.